The sequence spans 258 residues: MDKKNRPIGFFDSGVGGLSVMKEAIRLMPNENYIYFGDSKNAPYGIKTVEEVRTLTFNAVESLLEKNVKAIVVACNTATSAAIDLVRSKYKNIPIIGIEPALKLATKYNRKGNIIIMATPMTLKEKKFKSLMEKYGENYDIVSLPCAKLVEFIEHGILSGEELEEYLKEKFKSYKNNDIGVVVLGCTHYPFIKETLYKVIDKDIPIIDGGLGTSQELRRRLEEKNLLNTEDKKGSITIINSNGSEKMIELSKKLIESS.

Residues 12 to 13 (DS) and 44 to 45 (YG) contribute to the substrate site. C75 functions as the Proton donor/acceptor in the catalytic mechanism. Position 76–77 (76–77 (NT)) interacts with substrate. Residue C186 is the Proton donor/acceptor of the active site. 187-188 (TH) is a substrate binding site.

The protein belongs to the aspartate/glutamate racemases family.

It catalyses the reaction L-glutamate = D-glutamate. It functions in the pathway cell wall biogenesis; peptidoglycan biosynthesis. Functionally, provides the (R)-glutamate required for cell wall biosynthesis. This chain is Glutamate racemase, found in Clostridium botulinum (strain Alaska E43 / Type E3).